We begin with the raw amino-acid sequence, 423 residues long: Pre-mRNA polyadenylation factor fip-1 (423 aa).

The segment covering 1-11 (MDIDEDEDFYA) has biased composition (acidic residues). Disordered regions lie at residues 1-178 (MDID…PVRT), 278-307 (GPGG…GGPG), and 360-423 (PGGG…GRRW). A compositionally biased stretch (low complexity) spans 19–61 (PPTTAATTTTPATTTTTAAPTTTTTTTSTTTASAPPTTTSSST). A compositionally biased stretch (acidic residues) spans 65–90 (DELEEGEEEDEGGGAMDEDDDSDIDI). Residues 135-146 (GTNSNSNSSSNK) show a composition bias toward low complexity. The segment covering 360–415 (PGGGPGGPGTGGMGPGGPGGQGGQGQQFGGGFGGNQGQGGYGGYDQMGGAGGGGRG) has biased composition (gly residues).

This sequence belongs to the FIP1 family.

It is found in the nucleus. Functionally, pre-mRNA polyadenylation factor that directly interacts with poly(A) polymerase. This Neurospora crassa (strain ATCC 24698 / 74-OR23-1A / CBS 708.71 / DSM 1257 / FGSC 987) protein is Pre-mRNA polyadenylation factor fip-1 (fip-1).